The chain runs to 200 residues: MGKTIGLTGSVATGKSTVSNLIQQAGIPLVDADIAARKVVEKGTDGLAEIVAYFGKDILLEDGTLNRAKLGEIIFQDKEKREKLNEITHPRVKDYMLNERERFFEAGEKVVFFDIPLLFESHLESLVDQIIVVWTTPETELKRLMERNNLTKEEALARINSQMGIDEKAKKADFVIDNNESLEKTQKQVLTFIERFVNNK.

The region spanning 4–200 (TIGLTGSVAT…TFIERFVNNK (197 aa)) is the DPCK domain. 12–17 (ATGKST) lines the ATP pocket.

The protein belongs to the CoaE family.

The protein localises to the cytoplasm. The catalysed reaction is 3'-dephospho-CoA + ATP = ADP + CoA + H(+). It participates in cofactor biosynthesis; coenzyme A biosynthesis; CoA from (R)-pantothenate: step 5/5. Its function is as follows. Catalyzes the phosphorylation of the 3'-hydroxyl group of dephosphocoenzyme A to form coenzyme A. The sequence is that of Dephospho-CoA kinase from Listeria innocua serovar 6a (strain ATCC BAA-680 / CLIP 11262).